The chain runs to 211 residues: uncharacterized protein (211 aa).

Residues 155–211 (AAENASEEGDKKQIITDSGKLPETEELTETTNEDLDIKQFSPYSSESSANVSSYNKS) are disordered. The segment covering 178–188 (TEELTETTNED) has biased composition (acidic residues). Low complexity predominate over residues 195 to 211 (SPYSSESSANVSSYNKS).

This is an uncharacterized protein from Schizosaccharomyces pombe (strain 972 / ATCC 24843) (Fission yeast).